A 100-amino-acid polypeptide reads, in one-letter code: Class II hydrophobin FOXG_02746 (100 aa).

A signal peptide spans 1–17 (MQFYTIVSLFLAGTAYA). Intrachain disulfides connect C29-C79, C40-C70, C41-C53, and C80-C92.

This sequence belongs to the cerato-ulmin hydrophobin family. In terms of assembly, homodimer. Homodimers further self-assemble to form highly ordered films at water-air interfaces through intermolecular interactions.

It is found in the secreted. It localises to the cell wall. Its function is as follows. Aerial growth, conidiation, and dispersal of filamentous fungi in the environment rely upon a capability of their secreting small amphipathic proteins called hydrophobins (HPBs) with low sequence identity. Class I can self-assemble into an outermost layer of rodlet bundles on aerial cell surfaces, conferring cellular hydrophobicity that supports fungal growth, development and dispersal; whereas Class II form highly ordered films at water-air interfaces through intermolecular interactions but contribute nothing to the rodlet structure. FOXG_02746 is a class II hydrophobin that is likely required for plant colonization. The protein is Class II hydrophobin FOXG_02746 of Fusarium oxysporum f. sp. lycopersici (strain 4287 / CBS 123668 / FGSC 9935 / NRRL 34936) (Fusarium vascular wilt of tomato).